The chain runs to 703 residues: Zinc finger protein 750 (703 aa).

The CCHC-type zinc-finger motif lies at 25-51 (YKCFQCPFTCNEKSHLFNHMKYGLCKN). Positions 27, 30, 43, and 49 each coordinate Zn(2+). Disordered stretches follow at residues 64–113 (KCPK…DAKE), 350–527 (PASS…YGPM), 553–614 (WAPR…KQTA), and 630–703 (RVAD…TRVS). The span at 67-106 (KSSSLDPKQTHQPEPTSKPATSKSLLNGLSSFDPKSQQGS) shows a compositional bias: polar residues. Residues 352–361 (SSPSELNLSS) show a composition bias toward low complexity. The span at 367 to 394 (TECEKGSPVPEAKDPSKDGQRDAEEAKM) shows a compositional bias: basic and acidic residues. Composition is skewed to polar residues over residues 410–421 (SPTNFTQTSQTF) and 456–477 (GSES…SLQA). Over residues 574–611 (TETKGSEDRTSRVETPQDKAHSRTTPDVHTEDSSDEQK) the composition is skewed to basic and acidic residues. Residues 639-655 (QEPTRQDVPTLSATENL) are compositionally biased toward polar residues.

The protein localises to the nucleus. Transcription factor involved in epidermis differentiation. Required for terminal epidermal differentiation: acts downstream of p63/TP63 and activates expression of late epidermal differentiation genes. Specifically binds to the promoter of KLF4 and promotes its expression. This chain is Zinc finger protein 750 (Znf750), found in Mus musculus (Mouse).